The following is a 711-amino-acid chain: DNA topoisomerase 3 (711 aa).

A Toprim domain is found at 2 to 135; the sequence is KSLILAEKPS…IKRLWISSVT (134 aa). Positions 8 and 104 each coordinate Mg(2+). The region spanning 152–580 is the Topo IA-type catalytic domain; that stretch reads FQHLYEAALA…EMKAFTQSIV (429 aa). An interaction with DNA region spans residues 186 to 191; it reads SLGRVQ. The active-site O-(5'-phospho-DNA)-tyrosine intermediate is Tyr305. The segment at 672–699 is disordered; it reads KRFKNKSSGKVSKKEMKKYMNNEDSLEN. Residues 683-692 are compositionally biased toward basic and acidic residues; that stretch reads SKKEMKKYMN.

This sequence belongs to the type IA topoisomerase family. Mg(2+) is required as a cofactor.

The enzyme catalyses ATP-independent breakage of single-stranded DNA, followed by passage and rejoining.. In terms of biological role, releases the supercoiling and torsional tension of DNA, which is introduced during the DNA replication and transcription, by transiently cleaving and rejoining one strand of the DNA duplex. Introduces a single-strand break via transesterification at a target site in duplex DNA. The scissile phosphodiester is attacked by the catalytic tyrosine of the enzyme, resulting in the formation of a DNA-(5'-phosphotyrosyl)-enzyme intermediate and the expulsion of a 3'-OH DNA strand. The free DNA strand then undergoes passage around the unbroken strand, thus removing DNA supercoils. Finally, in the religation step, the DNA 3'-OH attacks the covalent intermediate to expel the active-site tyrosine and restore the DNA phosphodiester backbone. The chain is DNA topoisomerase 3 from Staphylococcus haemolyticus (strain JCSC1435).